A 284-amino-acid chain; its full sequence is 2-dehydro-3-deoxyphosphooctonate aldolase (284 aa).

This sequence belongs to the KdsA family.

It is found in the cytoplasm. It catalyses the reaction D-arabinose 5-phosphate + phosphoenolpyruvate + H2O = 3-deoxy-alpha-D-manno-2-octulosonate-8-phosphate + phosphate. The protein operates within carbohydrate biosynthesis; 3-deoxy-D-manno-octulosonate biosynthesis; 3-deoxy-D-manno-octulosonate from D-ribulose 5-phosphate: step 2/3. Its pathway is bacterial outer membrane biogenesis; lipopolysaccharide biosynthesis. The sequence is that of 2-dehydro-3-deoxyphosphooctonate aldolase from Pectobacterium carotovorum subsp. carotovorum (strain PC1).